We begin with the raw amino-acid sequence, 269 residues long: Shikimate dehydrogenase (NADP(+)) (269 aa).

Shikimate contacts are provided by residues 17-19 (SKS) and T64. K68 acts as the Proton acceptor in catalysis. NADP(+) is bound at residue D80. Shikimate is bound by residues N89 and D105. NADP(+)-binding positions include 130–134 (GAGGA), 154–159 (NRTRAK), and M213. A shikimate-binding site is contributed by Y215. G237 is an NADP(+) binding site.

Belongs to the shikimate dehydrogenase family. As to quaternary structure, homodimer.

The enzyme catalyses shikimate + NADP(+) = 3-dehydroshikimate + NADPH + H(+). It participates in metabolic intermediate biosynthesis; chorismate biosynthesis; chorismate from D-erythrose 4-phosphate and phosphoenolpyruvate: step 4/7. Involved in the biosynthesis of the chorismate, which leads to the biosynthesis of aromatic amino acids. Catalyzes the reversible NADPH linked reduction of 3-dehydroshikimate (DHSA) to yield shikimate (SA). In Neisseria gonorrhoeae (strain ATCC 700825 / FA 1090), this protein is Shikimate dehydrogenase (NADP(+)).